The primary structure comprises 222 residues: Protein-L-isoaspartate O-methyltransferase (222 aa).

S69 is a catalytic residue.

Belongs to the methyltransferase superfamily. L-isoaspartyl/D-aspartyl protein methyltransferase family.

It is found in the cytoplasm. It carries out the reaction [protein]-L-isoaspartate + S-adenosyl-L-methionine = [protein]-L-isoaspartate alpha-methyl ester + S-adenosyl-L-homocysteine. Catalyzes the methyl esterification of L-isoaspartyl residues in peptides and proteins that result from spontaneous decomposition of normal L-aspartyl and L-asparaginyl residues. It plays a role in the repair and/or degradation of damaged proteins. The sequence is that of Protein-L-isoaspartate O-methyltransferase from Nitrosomonas eutropha (strain DSM 101675 / C91 / Nm57).